We begin with the raw amino-acid sequence, 425 residues long: MSVTVVLGAQWGDEGKGKLADILAHESQICCRAQGGNNAGHTIVANGVTYDFHILPSGLVNPNCINVIGSGCVVHVPSFFKELEALEKHGLNTEGRIYISDRAHVVFDVHQQVDGLEEVELGQGFIGTTKKGIGPTYSTKMTRSGLRMCDLFDEEVFEQKLGRVVMGFQKRFGDLLQYDMQAEIEKYKGLREKLAPYVVDQIPLLASAKEKNAKILVEGANALMLDIDYGTYPFVTSSNTGLGGVLTGLTLGWRSLREVIGVVKAYTTRVGSGPFPTEQLNEFGEKLQSVGHEVGVTTGRKRRCGWLDLVVVKHSHACNDYTALNLTKLDVLDDFDELKVATSYSLNGQRLEGFPSNPDMLAQVEVQYETLPGWKKPTTGAKSYMDLPLAARKYVEYIENFVGVKVKWIGVGPARDHMISRSGNI.

GTP is bound by residues 12 to 18 (GDEGKGK) and 40 to 42 (GHT). Asp-13 serves as the catalytic Proton acceptor. The Mg(2+) site is built by Asp-13 and Gly-40. Residues 13 to 16 (DEGK), 38 to 41 (NAGH), Thr-129, Arg-143, Asn-221, Thr-236, and Arg-300 each bind IMP. The active-site Proton donor is the His-41. A substrate-binding site is contributed by 296–302 (VTTGRKR). GTP-binding positions include Arg-302, 328-330 (KLD), and 410-412 (GVG).

Belongs to the adenylosuccinate synthetase family. As to quaternary structure, homodimer. Mg(2+) is required as a cofactor.

The protein localises to the cytoplasm. The catalysed reaction is IMP + L-aspartate + GTP = N(6)-(1,2-dicarboxyethyl)-AMP + GDP + phosphate + 2 H(+). It functions in the pathway purine metabolism; AMP biosynthesis via de novo pathway; AMP from IMP: step 1/2. Its function is as follows. Plays an important role in the de novo pathway and in the salvage pathway of purine nucleotide biosynthesis. Catalyzes the first committed step in the biosynthesis of AMP from IMP. The protein is Adenylosuccinate synthetase of Phaeosphaeria nodorum (strain SN15 / ATCC MYA-4574 / FGSC 10173) (Glume blotch fungus).